A 193-amino-acid chain; its full sequence is Recombination protein RecR (193 aa).

The C4-type zinc finger occupies 61-76 (CTSCNALSESEVCEIC). A Toprim domain is found at 84-170 (SQLCMVLHPR…TFTKIAQGVP (87 aa)).

This sequence belongs to the RecR family.

Its function is as follows. May play a role in DNA repair. It seems to be involved in an RecBC-independent recombinational process of DNA repair. It may act with RecF and RecO. The polypeptide is Recombination protein RecR (Helicobacter pylori (strain HPAG1)).